The sequence spans 309 residues: DnaJ-like protein MG002 homolog (309 aa).

A J domain is found at 1–66 (MTLYDLLELP…KAEYDAMLRF (66 aa)).

The polypeptide is DnaJ-like protein MG002 homolog (Mycoplasma pneumoniae (strain ATCC 29342 / M129 / Subtype 1) (Mycoplasmoides pneumoniae)).